A 300-amino-acid chain; its full sequence is ATP-dependent (S)-NAD(P)H-hydrate dehydratase (300 aa).

One can recognise a YjeF C-terminal domain in the interval 6–297 (YAGKIKEFIP…GCIHQSFTSL (292 aa)). (6S)-NADPHX contacts are provided by residues Gly-106 and 158–164 (NEVEFKR). Residues 188-192 (KGSTD) and 218-227 (GSNRRCGGQG) each bind ATP. A (6S)-NADPHX-binding site is contributed by Asp-228.

This sequence belongs to the NnrD/CARKD family. It depends on Mg(2+) as a cofactor.

The enzyme catalyses (6S)-NADHX + ATP = ADP + phosphate + NADH + H(+). It catalyses the reaction (6S)-NADPHX + ATP = ADP + phosphate + NADPH + H(+). Its function is as follows. Catalyzes the dehydration of the S-form of NAD(P)HX at the expense of ATP, which is converted to ADP. Together with NAD(P)HX epimerase, which catalyzes the epimerization of the S- and R-forms, the enzyme allows the repair of both epimers of NAD(P)HX, a damaged form of NAD(P)H that is a result of enzymatic or heat-dependent hydration. In Pediculus humanus subsp. corporis (Body louse), this protein is ATP-dependent (S)-NAD(P)H-hydrate dehydratase.